The chain runs to 321 residues: Mechanosensory protein 3 (321 aa).

2 LIM zinc-binding domains span residues 27–86 (NKCN…DHSI) and 87–152 (HRCA…QMDD). Positions 217–276 (RRGPRTTIKQNQLDVLNEMFSNTPKPSKHARAKLALETGLSMRVIQVWFQNRRSKERRLK) form a DNA-binding region, homeobox.

As to quaternary structure, interacts with unc-86; the heterooligomer binds to the promoters of mec-3, mec-4 and mec-7. Expressed in the mechanosensory neurons ALML, ALMR, PLML, PLMR, AVM and PVM, and the FLPL and FLPR neurons.

It localises to the nucleus. Its function is as follows. Transcription factor. Specifies differentiation of the set of six touch receptor neurons (TRNs). May positively modulate expression of both its own gene and also of homeobox ARX homolog alr-1 in TRNs, forming a positive feedback loop with alr-1, thereby restricting the variability of expression of mec-3. Required to determine the identity of ALM sensory neurons, acting by interacting with unc-86, thereby preventing unc-86 cooperating with pag-3 to induce BDU-neuron specific genes. Binds cooperatively as a heterodimer with unc-86 to sites in the mec-3 gene promoter. Promotes outgrowth of lateral dendritic branches on the PVD nociceptive neurons, probably acting both directly, and upstream of zinc finger protein egl-46. The polypeptide is Mechanosensory protein 3 (mec-3) (Caenorhabditis elegans).